The chain runs to 299 residues: Ig alpha chain C region (299 aa).

Ig-like domains lie at 71-167 and 174-276; these read PSLS…ATIS and PQVH…KTID.

Its function is as follows. Ig alpha is the major immunoglobulin class in body secretions. It may serve both to defend against local infection and to prevent access of foreign antigens to the general immunologic system. In Oryctolagus cuniculus (Rabbit), this protein is Ig alpha chain C region.